A 525-amino-acid polypeptide reads, in one-letter code: 2,3-bisphosphoglycerate-independent phosphoglycerate mutase 2 (525 aa).

Mn(2+)-binding residues include aspartate 14 and serine 64. The active-site Phosphoserine intermediate is serine 64. Residues histidine 125, 155–156, arginine 187, arginine 193, 274–277, and lysine 347 each bind substrate; these read RD and RADR. The Mn(2+) site is built by aspartate 414, histidine 418, aspartate 455, histidine 456, and histidine 474.

It belongs to the BPG-independent phosphoglycerate mutase family. It depends on Mn(2+) as a cofactor.

The enzyme catalyses (2R)-2-phosphoglycerate = (2R)-3-phosphoglycerate. Its pathway is carbohydrate degradation; glycolysis; pyruvate from D-glyceraldehyde 3-phosphate: step 3/5. Catalyzes the interconversion of 2-phosphoglycerate and 3-phosphoglycerate. In Methanosarcina barkeri (strain Fusaro / DSM 804), this protein is 2,3-bisphosphoglycerate-independent phosphoglycerate mutase 2.